A 71-amino-acid chain; its full sequence is Small ribosomal subunit protein bS21 (71 aa).

Belongs to the bacterial ribosomal protein bS21 family.

This chain is Small ribosomal subunit protein bS21, found in Hahella chejuensis (strain KCTC 2396).